A 380-amino-acid chain; its full sequence is Homeobox protein ceh-6 (380 aa).

Residues 1 to 25 are compositionally biased toward low complexity; that stretch reads MLIPSSSSIPSSLSASASDSEPSSL. 3 disordered regions span residues 1 to 31, 167 to 190, and 265 to 286; these read MLIPSSSSIPSSLSASASDSEPSSLNGSGIS, SGSVSGAGGPHQPLSDISDDSEQT, and GSPNSTFEKMTGQAGRKRKKRT. Residues 187–261 form the POU-specific domain; that stretch reads SEQTCPDDLE…LLFKWLEEAD (75 aa). Residues 281–340 constitute a DNA-binding region (homeobox); that stretch reads KRKKRTSIEVNVKSRLEFHFQSNQKPNAQEITQVAMELQLEKEVVRVWFCNRRQKEKRIA.

Belongs to the POU transcription factor family. Class-3 subfamily. In terms of assembly, interacts with egl-27, sox-2 and sem-4. Interacts with wdr-5.1. Expressed in a series of neurons in the ring ganglia, excretory cell, dividing neuroblasts in the ventral cord and rectal cells.

Its subcellular location is the nucleus. In terms of biological role, vital for embryonic development and essential for the proper function of the excretory cell. Required for the transdifferentiation of the Y rectal epithelial cell to the PDA motor neuron during larval development. The sequence is that of Homeobox protein ceh-6 from Caenorhabditis elegans.